A 387-amino-acid chain; its full sequence is Succinate--CoA ligase [ADP-forming] subunit beta (387 aa).

ATP is bound by residues lysine 46, 53–55, glutamate 99, alanine 102, and glutamate 107; that span reads GRG. Mg(2+) is bound by residues asparagine 199 and aspartate 213. Residues asparagine 264 and 321–323 each bind substrate; that span reads GIV.

It belongs to the succinate/malate CoA ligase beta subunit family. In terms of assembly, heterotetramer of two alpha and two beta subunits. The cofactor is Mg(2+).

It carries out the reaction succinate + ATP + CoA = succinyl-CoA + ADP + phosphate. The catalysed reaction is GTP + succinate + CoA = succinyl-CoA + GDP + phosphate. It participates in carbohydrate metabolism; tricarboxylic acid cycle; succinate from succinyl-CoA (ligase route): step 1/1. In terms of biological role, succinyl-CoA synthetase functions in the citric acid cycle (TCA), coupling the hydrolysis of succinyl-CoA to the synthesis of either ATP or GTP and thus represents the only step of substrate-level phosphorylation in the TCA. The beta subunit provides nucleotide specificity of the enzyme and binds the substrate succinate, while the binding sites for coenzyme A and phosphate are found in the alpha subunit. The chain is Succinate--CoA ligase [ADP-forming] subunit beta from Campylobacter jejuni subsp. doylei (strain ATCC BAA-1458 / RM4099 / 269.97).